A 754-amino-acid polypeptide reads, in one-letter code: Glutathione biosynthesis bifunctional protein GshAB (754 aa).

The interval 1–333 is glutamate--cysteine ligase; it reads MHINQLLQHA…KAQKLNDKIA (333 aa). In terms of domain architecture, ATP-grasp spans 489 to 752; it reads KKILRENGYP…LAKLFPEIST (264 aa). An ATP-binding site is contributed by 516–574; the sequence is SQIKNKPIVVKPKTTNFGLGISIFETAASHNDYEKALDIAFIEDYSVLVEEFIPGTEYR. Mg(2+)-binding residues include Asp-696, Glu-717, and Asn-719. Residues Asp-696, Glu-717, and Asn-719 each contribute to the Mn(2+) site.

It in the N-terminal section; belongs to the glutamate--cysteine ligase type 1 family. Type 2 subfamily. In terms of assembly, monomer. The cofactor is Mg(2+). Mn(2+) is required as a cofactor.

The catalysed reaction is L-cysteine + L-glutamate + ATP = gamma-L-glutamyl-L-cysteine + ADP + phosphate + H(+). The enzyme catalyses gamma-L-glutamyl-L-cysteine + glycine + ATP = glutathione + ADP + phosphate + H(+). It functions in the pathway sulfur metabolism; glutathione biosynthesis; glutathione from L-cysteine and L-glutamate: step 1/2. The protein operates within sulfur metabolism; glutathione biosynthesis; glutathione from L-cysteine and L-glutamate: step 2/2. Functionally, synthesizes glutathione from L-glutamate and L-cysteine via gamma-L-glutamyl-L-cysteine. The sequence is that of Glutathione biosynthesis bifunctional protein GshAB from Streptococcus mutans serotype c (strain ATCC 700610 / UA159).